Consider the following 424-residue polypeptide: Anaerobic glycerol-3-phosphate dehydrogenase subunit B (424 aa).

Belongs to the anaerobic G-3-P dehydrogenase subunit B family. Composed of a catalytic GlpA/B dimer and of membrane bound GlpC. The cofactor is FMN.

The catalysed reaction is a quinone + sn-glycerol 3-phosphate = dihydroxyacetone phosphate + a quinol. Its pathway is polyol metabolism; glycerol degradation via glycerol kinase pathway; glycerone phosphate from sn-glycerol 3-phosphate (anaerobic route): step 1/1. Conversion of glycerol 3-phosphate to dihydroxyacetone. Uses fumarate or nitrate as electron acceptor. The sequence is that of Anaerobic glycerol-3-phosphate dehydrogenase subunit B from Yersinia pestis bv. Antiqua (strain Antiqua).